The sequence spans 297 residues: tRNA dimethylallyltransferase (297 aa).

Residue 10-17 (GITASGKS) coordinates ATP. A substrate-binding site is contributed by 12–17 (TASGKS). Residues 36–39 (DSKQ) are interaction with substrate tRNA.

This sequence belongs to the IPP transferase family. In terms of assembly, monomer. It depends on Mg(2+) as a cofactor.

The catalysed reaction is adenosine(37) in tRNA + dimethylallyl diphosphate = N(6)-dimethylallyladenosine(37) in tRNA + diphosphate. Catalyzes the transfer of a dimethylallyl group onto the adenine at position 37 in tRNAs that read codons beginning with uridine, leading to the formation of N6-(dimethylallyl)adenosine (i(6)A). This Wolbachia pipientis subsp. Culex pipiens (strain wPip) protein is tRNA dimethylallyltransferase.